The chain runs to 143 residues: Large ribosomal subunit protein uL15 (143 aa).

Positions 1–45 are disordered; the sequence is MLLNTVQPGVGAKHAKRRVGRGIGSGLGKTCGRGHKGQKSRAGGF. Positions 21–31 are enriched in gly residues; sequence RGIGSGLGKTC.

This sequence belongs to the universal ribosomal protein uL15 family. Part of the 50S ribosomal subunit.

Binds to the 23S rRNA. In Chromobacterium violaceum (strain ATCC 12472 / DSM 30191 / JCM 1249 / CCUG 213 / NBRC 12614 / NCIMB 9131 / NCTC 9757 / MK), this protein is Large ribosomal subunit protein uL15.